Reading from the N-terminus, the 30-residue chain is Cyclotide vdif-A (30 aa).

A cross-link (cyclopeptide (Gly-Asn)) is located at residues 1–30; that stretch reads GIPCGESCVFIPCISSVVGCSCKSKVCYRN. 3 cysteine pairs are disulfide-bonded: cysteine 4-cysteine 20, cysteine 8-cysteine 22, and cysteine 13-cysteine 27.

Belongs to the cyclotide family. Bracelet subfamily. This is a cyclic peptide.

In terms of biological role, probably participates in a plant defense mechanism. The protein is Cyclotide vdif-A of Viola diffusa.